A 542-amino-acid polypeptide reads, in one-letter code: Protein phosphatase 1G (542 aa).

Gly2 carries the N-myristoyl glycine lipid modification. Position 22 is an omega-N-methylarginine (Arg22). One can recognise a PPM-type phosphatase domain in the interval 26 to 502 (PYGFSAMQGW…DNMTCIIICF (477 aa)). Mn(2+) is bound by residues Asp60 and Gly61. Disordered regions lie at residues 118–139 (AGRP…DVDN) and 162–325 (QNCQ…SDSG). Thr122 carries the post-translational modification Phosphothreonine. Composition is skewed to acidic residues over residues 123-139 (EDED…DVDN) and 259-309 (DSED…DEEM). Lys380 is subject to N6-acetyllysine. Residues Asp438 and Asp493 each contribute to the Mn(2+) site. The segment at 510 to 542 (LQPESGKRKLEEALSTEGAEENGNSDKKKAKRD) is disordered. A Phosphoserine modification is found at Ser524.

This sequence belongs to the PP2C family. As to quaternary structure, interacts with NOL3; may dephosphorylate NOL3. The cofactor is Mg(2+). It depends on Mn(2+) as a cofactor.

It localises to the cytoplasm. The protein localises to the membrane. It catalyses the reaction O-phospho-L-seryl-[protein] + H2O = L-seryl-[protein] + phosphate. The enzyme catalyses O-phospho-L-threonyl-[protein] + H2O = L-threonyl-[protein] + phosphate. This is Protein phosphatase 1G from Rattus norvegicus (Rat).